The sequence spans 76 residues: Sec-independent protein translocase protein TatA (76 aa).

A helical transmembrane segment spans residues 1–21 (MGGLSIWHWLIVLLIVALVFG). Positions 43–76 (MKEGEAPADAQQLPRSGSVDVNAKETTRSDSNKA) are disordered. A compositionally biased stretch (basic and acidic residues) spans 64-76 (NAKETTRSDSNKA).

This sequence belongs to the TatA/E family. In terms of assembly, the Tat system comprises two distinct complexes: a TatABC complex, containing multiple copies of TatA, TatB and TatC subunits, and a separate TatA complex, containing only TatA subunits. Substrates initially bind to the TatABC complex, which probably triggers association of the separate TatA complex to form the active translocon.

Its subcellular location is the cell inner membrane. In terms of biological role, part of the twin-arginine translocation (Tat) system that transports large folded proteins containing a characteristic twin-arginine motif in their signal peptide across membranes. TatA could form the protein-conducting channel of the Tat system. The protein is Sec-independent protein translocase protein TatA of Burkholderia lata (strain ATCC 17760 / DSM 23089 / LMG 22485 / NCIMB 9086 / R18194 / 383).